The following is a 332-amino-acid chain: Glycerol-3-phosphate dehydrogenase [NAD(P)+] (332 aa).

Positions 15, 16, and 110 each coordinate NADPH. Residues Lys110, Gly137, and Ser139 each coordinate sn-glycerol 3-phosphate. Ala141 lines the NADPH pocket. Sn-glycerol 3-phosphate-binding residues include Lys192, Asp245, Ser255, Arg256, and Asn257. The active-site Proton acceptor is the Lys192. An NADPH-binding site is contributed by Arg256. Glu282 is a binding site for NADPH.

It belongs to the NAD-dependent glycerol-3-phosphate dehydrogenase family.

The protein localises to the cytoplasm. It carries out the reaction sn-glycerol 3-phosphate + NAD(+) = dihydroxyacetone phosphate + NADH + H(+). The catalysed reaction is sn-glycerol 3-phosphate + NADP(+) = dihydroxyacetone phosphate + NADPH + H(+). It participates in membrane lipid metabolism; glycerophospholipid metabolism. In terms of biological role, catalyzes the reduction of the glycolytic intermediate dihydroxyacetone phosphate (DHAP) to sn-glycerol 3-phosphate (G3P), the key precursor for phospholipid synthesis. In Coxiella burnetii (strain CbuK_Q154) (Coxiella burnetii (strain Q154)), this protein is Glycerol-3-phosphate dehydrogenase [NAD(P)+].